The primary structure comprises 320 residues: GTP 3',8-cyclase (320 aa).

One can recognise a Radical SAM core domain in the interval 4–226 (TFQRSINYMR…PIITDATSPA (223 aa)). R13 provides a ligand contact to GTP. Residues C20 and C24 each coordinate [4Fe-4S] cluster. S-adenosyl-L-methionine is bound at residue Y26. C27 serves as a coordination point for [4Fe-4S] cluster. R63 contacts GTP. Residue G67 coordinates S-adenosyl-L-methionine. Position 94 (T94) interacts with GTP. S118 provides a ligand contact to S-adenosyl-L-methionine. K155 is a GTP binding site. M189 contributes to the S-adenosyl-L-methionine binding site. [4Fe-4S] cluster is bound by residues C249 and C252. 254–256 (RIR) lines the GTP pocket. A [4Fe-4S] cluster-binding site is contributed by C266.

Belongs to the radical SAM superfamily. MoaA family. In terms of assembly, monomer and homodimer. [4Fe-4S] cluster serves as cofactor.

It catalyses the reaction GTP + AH2 + S-adenosyl-L-methionine = (8S)-3',8-cyclo-7,8-dihydroguanosine 5'-triphosphate + 5'-deoxyadenosine + L-methionine + A + H(+). Its pathway is cofactor biosynthesis; molybdopterin biosynthesis. In terms of biological role, catalyzes the cyclization of GTP to (8S)-3',8-cyclo-7,8-dihydroguanosine 5'-triphosphate. In Alkaliphilus metalliredigens (strain QYMF), this protein is GTP 3',8-cyclase.